The sequence spans 521 residues: GMP synthase [glutamine-hydrolyzing] (521 aa).

In terms of domain architecture, Glutamine amidotransferase type-1 spans 9-203 (KILILDFGSQ…ISGICQCEKN (195 aa)). The active-site Nucleophile is Cys-86. Residues His-177 and Glu-179 contribute to the active site. The region spanning 204–396 (WTTDNIIAKL…LSIPPHIIYR (193 aa)) is the GMPS ATP-PPase domain. Residue 231 to 237 (SGGVDSL) coordinates ATP.

In terms of assembly, homodimer.

The catalysed reaction is XMP + L-glutamine + ATP + H2O = GMP + L-glutamate + AMP + diphosphate + 2 H(+). It functions in the pathway purine metabolism; GMP biosynthesis; GMP from XMP (L-Gln route): step 1/1. Its function is as follows. Catalyzes the synthesis of GMP from XMP. The polypeptide is GMP synthase [glutamine-hydrolyzing] (Ruthia magnifica subsp. Calyptogena magnifica).